A 569-amino-acid chain; its full sequence is RNA demethylase ALKBH10B (569 aa).

Positions 118–151 form a coiled coil; that stretch reads QKVAAKKAEDLKQKKTEEEAEEDLKEVVATEEEE. The disordered stretch occupies residues 164-190; that stretch reads ENDVNGDVEDVEDDSPTSDITDSGSHQ. Acidic residues predominate over residues 167–179; the sequence is VNGDVEDVEDDSP. Polar residues predominate over residues 180 to 189; sequence TSDITDSGSH. His-366, Glu-368, and His-421 together coordinate Fe cation. Arg-430 contacts 2-oxoglutarate. A compositionally biased stretch (basic residues) spans 531–545; that stretch reads KHVKHLPPRAQKKRL. Positions 531–569 are disordered; sequence KHVKHLPPRAQKKRLLPLPPAASSSPAGGSTSEPVITVG. Positions 551–560 are enriched in low complexity; it reads AASSSPAGGS.

The protein belongs to the alkB family. Fe(2+) serves as cofactor.

It catalyses the reaction an N(6)-methyladenosine in mRNA + 2-oxoglutarate + O2 = an adenosine in mRNA + formaldehyde + succinate + CO2. Functionally, dioxygenase that demethylates RNA by oxidative demethylation: specifically demethylates N(6)-methyladenosine (m6A) RNA, the most prevalent internal modification of messenger RNA (mRNA) in higher eukaryotes. ALKBH10B-mediated mRNA m6A demethylation stabilizes the mRNA of the key flowering time regulators FT, SPL3 and SPL9, which are involved in the control of floral transition. In Arabidopsis thaliana (Mouse-ear cress), this protein is RNA demethylase ALKBH10B.